Here is a 957-residue protein sequence, read N- to C-terminus: Glycine dehydrogenase (decarboxylating) (957 aa).

Position 708 is an N6-(pyridoxal phosphate)lysine (lysine 708).

It belongs to the GcvP family. The glycine cleavage system is composed of four proteins: P, T, L and H. The cofactor is pyridoxal 5'-phosphate.

It carries out the reaction N(6)-[(R)-lipoyl]-L-lysyl-[glycine-cleavage complex H protein] + glycine + H(+) = N(6)-[(R)-S(8)-aminomethyldihydrolipoyl]-L-lysyl-[glycine-cleavage complex H protein] + CO2. In terms of biological role, the glycine cleavage system catalyzes the degradation of glycine. The P protein binds the alpha-amino group of glycine through its pyridoxal phosphate cofactor; CO(2) is released and the remaining methylamine moiety is then transferred to the lipoamide cofactor of the H protein. The protein is Glycine dehydrogenase (decarboxylating) of Cronobacter sakazakii (strain ATCC BAA-894) (Enterobacter sakazakii).